The sequence spans 931 residues: Protocadherin gamma-A5 (931 aa).

The N-terminal stretch at 1 to 29 (MASPPRGWGCGELLLPFMLLGTLCEPGSG) is a signal peptide. Cadherin domains are found at residues 30-133 (QIRY…FPRF), 134-242 (RDEE…APLF), 243-347 (TPSE…APEV), 348-452 (ILTS…PPNF), 453-562 (PQAS…TPEI), and 570-683 (DGST…TPID). Residues 30-692 (QIRYSMPEEL…DPEDLDLTLY (663 aa)) are Extracellular-facing. N-linked (GlcNAc...) asparagine glycans are attached at residues asparagine 419 and asparagine 545. A helical membrane pass occupies residues 693–713 (LVVAVAAVSCVFLAFVIVLLV). Residues 714-931 (LRLRRWHKSR…KKKSGKKEKK (218 aa)) lie on the Cytoplasmic side of the membrane. Disordered regions lie at residues 800–840 (NKEE…WPNN) and 901–931 (ATLT…KEKK). The segment covering 809 to 840 (APPNTDWRFSQAQRPGTSGSQNGDDTGTWPNN) has biased composition (polar residues). The span at 921-931 (NKKKSGKKEKK) shows a compositional bias: basic residues.

The protein localises to the cell membrane. In terms of biological role, potential calcium-dependent cell-adhesion protein. May be involved in the establishment and maintenance of specific neuronal connections in the brain. In Homo sapiens (Human), this protein is Protocadherin gamma-A5 (PCDHGA5).